We begin with the raw amino-acid sequence, 148 residues long: Leghemoglobin 2 (148 aa).

In terms of domain architecture, Globin spans G2–S148. Y30 is subject to Nitrated tyrosine. S45 is a binding site for heme b. The residue at position 45 (S45) is a Phosphoserine. O2 is bound at residue H63. K66, H95, and K98 together coordinate heme b. Y136 is subject to Nitrated tyrosine.

This sequence belongs to the plant globin family. In terms of assembly, monomer. In terms of processing, nitrated in effective nodules and particularly in hypoxic conditions; this mechanism may play a protective role in the symbiosis by buffering toxic peroxynitrite NO(2)(-). Nitration level decrease during nodule senescence. Post-translationally, phosphorylation at Ser-45 disrupts the molecular environment of its porphyrin ring oxygen binding pocket, thus leading to a reduced oxygen consumption and to the delivery of oxygen O(2) to symbiosomes. As to expression, stem nodules.

Its subcellular location is the cytoplasm. The protein localises to the cytosol. The protein resides in the nucleus. Its function is as follows. Leghemoglobin that reversibly binds oxygen O(2) through a pentacoordinated heme iron. In stem nodules, facilitates the diffusion of oxygen to the bacteroids while preventing the bacterial nitrogenase from being inactivated by buffering dioxygen, nitric oxide and carbon monoxide, and promoting the formation of reactive oxygen species (ROS, e.g. H(2)O(2)). This role is essential for symbiotic nitrogen fixation (SNF). This is Leghemoglobin 2 from Sesbania rostrata.